The chain runs to 178 residues: Large ribosomal subunit protein uL6 (178 aa).

This sequence belongs to the universal ribosomal protein uL6 family. As to quaternary structure, part of the 50S ribosomal subunit.

Its function is as follows. This protein binds to the 23S rRNA, and is important in its secondary structure. It is located near the subunit interface in the base of the L7/L12 stalk, and near the tRNA binding site of the peptidyltransferase center. In Streptococcus pneumoniae (strain ATCC 700669 / Spain 23F-1), this protein is Large ribosomal subunit protein uL6.